A 413-amino-acid polypeptide reads, in one-letter code: Multifunctional CCA protein (413 aa).

Positions 8 and 11 each coordinate ATP. The CTP site is built by Gly8 and Arg11. Mg(2+)-binding residues include Asp21 and Asp23. Arg91, Arg137, and Arg140 together coordinate ATP. CTP contacts are provided by Arg91, Arg137, and Arg140. The 102-residue stretch at Thr228–Trp329 folds into the HD domain.

It belongs to the tRNA nucleotidyltransferase/poly(A) polymerase family. Bacterial CCA-adding enzyme type 1 subfamily. In terms of assembly, monomer. Can also form homodimers and oligomers. Mg(2+) is required as a cofactor. Ni(2+) serves as cofactor.

It catalyses the reaction a tRNA precursor + 2 CTP + ATP = a tRNA with a 3' CCA end + 3 diphosphate. The catalysed reaction is a tRNA with a 3' CCA end + 2 CTP + ATP = a tRNA with a 3' CCACCA end + 3 diphosphate. Its function is as follows. Catalyzes the addition and repair of the essential 3'-terminal CCA sequence in tRNAs without using a nucleic acid template. Adds these three nucleotides in the order of C, C, and A to the tRNA nucleotide-73, using CTP and ATP as substrates and producing inorganic pyrophosphate. tRNA 3'-terminal CCA addition is required both for tRNA processing and repair. Also involved in tRNA surveillance by mediating tandem CCA addition to generate a CCACCA at the 3' terminus of unstable tRNAs. While stable tRNAs receive only 3'-terminal CCA, unstable tRNAs are marked with CCACCA and rapidly degraded. This chain is Multifunctional CCA protein, found in Aeromonas salmonicida (strain A449).